Reading from the N-terminus, the 310-residue chain is Olfactory receptor 5P54 (310 aa).

Residues 1–25 (MNGGNHTSMTELFILGPTEDPTFCI) are Extracellular-facing. The N-linked (GlcNAc...) asparagine glycan is linked to asparagine 5. Residues 26–46 (AFFVIFLGVYMVTLVGNISII) traverse the membrane as a helical segment. The Cytoplasmic segment spans residues 47 to 54 (TLIRISSQ). A helical membrane pass occupies residues 55–75 (LHTPVYLFLNHLAFVDILYST). At 76–99 (LVSVIMLMELLEHELALPVAACAA) the chain is on the extracellular side. A disulfide bridge links cysteine 97 with cysteine 189. A helical membrane pass occupies residues 100–120 (ELCITVLFGSSECFLLAAMAY). Residues 121–133 (DCYVAICSPLLYS) are Cytoplasmic-facing. A helical transmembrane segment spans residues 134-154 (TLMSSRVCFLLLGMSYVGGCM). At 155-196 (NGWIFTGCLLNLSFYGPYQIDHFFCDFSPLLKLSCSDVSIIG) the chain is on the extracellular side. Asparagine 165 carries an N-linked (GlcNAc...) asparagine glycan. Residues 197–217 (IIPSISSGSIIVVTVLVIAVF) form a helical membrane-spanning segment. Topologically, residues 218-237 (YICILMTILKMHSTDGCHKA) are cytoplasmic. The helical transmembrane segment at 238–258 (FSTCNSYLTAVTLYYGTITFI) threads the bilayer. The Extracellular portion of the chain corresponds to 259-271 (YVMPKSNYSTEKN). Asparagine 265 carries N-linked (GlcNAc...) asparagine glycosylation. A helical transmembrane segment spans residues 272–292 (KVLSEFYTVVIPMLNHLIYSL). The Cytoplasmic segment spans residues 293–310 (KNRDVKDALRKAIVRVYT).

The protein belongs to the G-protein coupled receptor 1 family.

It is found in the cell membrane. Its function is as follows. Potential odorant receptor. The polypeptide is Olfactory receptor 5P54 (Mus musculus (Mouse)).